Consider the following 537-residue polypeptide: Bifunctional purine biosynthesis protein PurH (537 aa).

In terms of domain architecture, MGS-like spans 11–158 (ADIQRVRRAL…KNHAYVGVIV (148 aa)).

It belongs to the PurH family.

The enzyme catalyses (6R)-10-formyltetrahydrofolate + 5-amino-1-(5-phospho-beta-D-ribosyl)imidazole-4-carboxamide = 5-formamido-1-(5-phospho-D-ribosyl)imidazole-4-carboxamide + (6S)-5,6,7,8-tetrahydrofolate. It carries out the reaction IMP + H2O = 5-formamido-1-(5-phospho-D-ribosyl)imidazole-4-carboxamide. It participates in purine metabolism; IMP biosynthesis via de novo pathway; 5-formamido-1-(5-phospho-D-ribosyl)imidazole-4-carboxamide from 5-amino-1-(5-phospho-D-ribosyl)imidazole-4-carboxamide (10-formyl THF route): step 1/1. It functions in the pathway purine metabolism; IMP biosynthesis via de novo pathway; IMP from 5-formamido-1-(5-phospho-D-ribosyl)imidazole-4-carboxamide: step 1/1. The sequence is that of Bifunctional purine biosynthesis protein PurH from Parvibaculum lavamentivorans (strain DS-1 / DSM 13023 / NCIMB 13966).